The following is a 533-amino-acid chain: Putative amidase C550.07 (533 aa).

Active-site charge relay system residues include Lys-132 and Ser-207. Residue Ser-231 is the Acyl-ester intermediate of the active site.

This sequence belongs to the amidase family.

It is found in the cytoplasm. The protein localises to the nucleus. The catalysed reaction is a monocarboxylic acid amide + H2O = a monocarboxylate + NH4(+). The polypeptide is Putative amidase C550.07 (Schizosaccharomyces pombe (strain 972 / ATCC 24843) (Fission yeast)).